Consider the following 91-residue polypeptide: Small ribosomal subunit protein bS6 (91 aa).

This sequence belongs to the bacterial ribosomal protein bS6 family.

Functionally, binds together with bS18 to 16S ribosomal RNA. The polypeptide is Small ribosomal subunit protein bS6 (Leptospira borgpetersenii serovar Hardjo-bovis (strain JB197)).